The chain runs to 209 residues: Uridine kinase (209 aa).

12–19 provides a ligand contact to ATP; it reads GGSGGGKT.

It belongs to the uridine kinase family.

The protein localises to the cytoplasm. It catalyses the reaction uridine + ATP = UMP + ADP + H(+). It carries out the reaction cytidine + ATP = CMP + ADP + H(+). Its pathway is pyrimidine metabolism; CTP biosynthesis via salvage pathway; CTP from cytidine: step 1/3. It functions in the pathway pyrimidine metabolism; UMP biosynthesis via salvage pathway; UMP from uridine: step 1/1. This chain is Uridine kinase, found in Streptococcus agalactiae serotype III (strain NEM316).